A 303-amino-acid chain; its full sequence is Phosphatidylglycerol--prolipoprotein diacylglyceryl transferase (303 aa).

A run of 4 helical transmembrane segments spans residues 18–38 (LGPF…LVGL), 58–78 (LLPI…VAFE), 106–126 (IWGG…SIIF), and 133–153 (EHFW…QAIG). Arg154 contributes to the a 1,2-diacyl-sn-glycero-3-phospho-(1'-sn-glycerol) binding site. 3 helical membrane-spanning segments follow: residues 193–213 (PTFL…IFLF), 223–243 (LPPG…RFWI), and 266–286 (IAQL…WRIY).

The protein belongs to the Lgt family.

It is found in the cell inner membrane. It catalyses the reaction L-cysteinyl-[prolipoprotein] + a 1,2-diacyl-sn-glycero-3-phospho-(1'-sn-glycerol) = an S-1,2-diacyl-sn-glyceryl-L-cysteinyl-[prolipoprotein] + sn-glycerol 1-phosphate + H(+). The protein operates within protein modification; lipoprotein biosynthesis (diacylglyceryl transfer). Its function is as follows. Catalyzes the transfer of the diacylglyceryl group from phosphatidylglycerol to the sulfhydryl group of the N-terminal cysteine of a prolipoprotein, the first step in the formation of mature lipoproteins. This Prochlorococcus marinus (strain NATL2A) protein is Phosphatidylglycerol--prolipoprotein diacylglyceryl transferase.